The chain runs to 155 residues: SsrA-binding protein (155 aa).

It belongs to the SmpB family.

Its subcellular location is the cytoplasm. Required for rescue of stalled ribosomes mediated by trans-translation. Binds to transfer-messenger RNA (tmRNA), required for stable association of tmRNA with ribosomes. tmRNA and SmpB together mimic tRNA shape, replacing the anticodon stem-loop with SmpB. tmRNA is encoded by the ssrA gene; the 2 termini fold to resemble tRNA(Ala) and it encodes a 'tag peptide', a short internal open reading frame. During trans-translation Ala-aminoacylated tmRNA acts like a tRNA, entering the A-site of stalled ribosomes, displacing the stalled mRNA. The ribosome then switches to translate the ORF on the tmRNA; the nascent peptide is terminated with the 'tag peptide' encoded by the tmRNA and targeted for degradation. The ribosome is freed to recommence translation, which seems to be the essential function of trans-translation. In Streptococcus sanguinis (strain SK36), this protein is SsrA-binding protein.